Here is a 279-residue protein sequence, read N- to C-terminus: DegV domain-containing protein CPE1310 (279 aa).

The DegV domain occupies 4–277 (IKIITDSTCD…PKVCALFYVE (274 aa)). Positions 62 and 94 each coordinate hexadecanoate.

Its function is as follows. May bind long-chain fatty acids, such as palmitate, and may play a role in lipid transport or fatty acid metabolism. The sequence is that of DegV domain-containing protein CPE1310 from Clostridium perfringens (strain 13 / Type A).